A 732-amino-acid chain; its full sequence is Ionotropic receptor 40a (732 aa).

The first 19 residues, 1–19 (MHKFLALGLLPYLLGLLNS), serve as a signal peptide directing secretion. N-linked (GlcNAc...) asparagine glycosylation is found at Asn-18, Asn-235, and Asn-299. At 20–369 (TRLTFIGNDE…RPFKQDIWPH (350 aa)) the chain is on the extracellular side. A helical transmembrane segment spans residues 370 to 390 (LILTIIFSGPIFYGIIALPYI). Topologically, residues 391 to 465 (WRRRWANSDV…NELHNGYRAK (75 aa)) are cytoplasmic. The helical transmembrane segment at 466–486 (FLTIVYWIAATYVLADVYSAQ) threads the bilayer. The Extracellular segment spans residues 487–688 (LTSQFARPAR…LNLRMLQGAF (202 aa)). Residue Asn-531 is glycosylated (N-linked (GlcNAc...) asparagine). The chain crosses the membrane as a helical span at residues 689 to 709 (IALGVGSLAAGVILLLEIVFI). Over 710–732 (KLDQARLWMLCSRLQWIRYDRKV) the chain is Cytoplasmic.

Belongs to the glutamate-gated ion channel (TC 1.A.10.1) family. In the antenna, detected in sacculus neurons which innervate the first and second chambers (at protein level).

The protein resides in the cell membrane. In terms of biological role, integral part of a neural sensory system in the antenna that provides the neural basis for the response to environmental changes in humidity (hygrosensation). Together with Ir25a and Ir93a, mediates the response of the hygrosensory sacculus neurons to changes in relative humidity and is required for dry detection behavior. This Drosophila melanogaster (Fruit fly) protein is Ionotropic receptor 40a.